Reading from the N-terminus, the 453-residue chain is Ribulose bisphosphate carboxylase large chain (453 aa).

Residues 1-2 (MS) constitute a propeptide that is removed on maturation. Pro3 carries the N-acetylproline modification. The residue at position 14 (Lys14) is an N6,N6,N6-trimethyllysine. Positions 123 and 173 each coordinate substrate. Lys175 (proton acceptor) is an active-site residue. Lys177 contacts substrate. Mg(2+)-binding residues include Lys201, Asp203, and Glu204. Lys201 carries the N6-carboxylysine modification. Catalysis depends on His294, which acts as the Proton acceptor. Residues Arg295, His327, and Ser379 each coordinate substrate.

It belongs to the RuBisCO large chain family. Type I subfamily. As to quaternary structure, heterohexadecamer of 8 large chains and 8 small chains; disulfide-linked. The disulfide link is formed within the large subunit homodimers. It depends on Mg(2+) as a cofactor. The disulfide bond which can form in the large chain dimeric partners within the hexadecamer appears to be associated with oxidative stress and protein turnover.

Its subcellular location is the plastid. It localises to the chloroplast. The catalysed reaction is 2 (2R)-3-phosphoglycerate + 2 H(+) = D-ribulose 1,5-bisphosphate + CO2 + H2O. The enzyme catalyses D-ribulose 1,5-bisphosphate + O2 = 2-phosphoglycolate + (2R)-3-phosphoglycerate + 2 H(+). In terms of biological role, ruBisCO catalyzes two reactions: the carboxylation of D-ribulose 1,5-bisphosphate, the primary event in carbon dioxide fixation, as well as the oxidative fragmentation of the pentose substrate in the photorespiration process. Both reactions occur simultaneously and in competition at the same active site. In Galium palustre (Common marsh bedstraw), this protein is Ribulose bisphosphate carboxylase large chain.